We begin with the raw amino-acid sequence, 441 residues long: tRNA modification GTPase MnmE (441 aa).

Arg-23, Glu-81, and Lys-121 together coordinate (6S)-5-formyl-5,6,7,8-tetrahydrofolate. One can recognise a TrmE-type G domain in the interval 218–363; it reads GFRVAIVGPP…LESWIAAFVS (146 aa). Residue Asn-228 coordinates K(+). GTP-binding positions include 228–233, 247–253, 272–275, and 326–329; these read NAGKSS, TDIAGTT, DTAG, and NKAD. Mg(2+) is bound at residue Ser-232. K(+)-binding residues include Thr-247, Ile-249, and Thr-252. Thr-253 is a binding site for Mg(2+). Residue Lys-441 coordinates (6S)-5-formyl-5,6,7,8-tetrahydrofolate.

The protein belongs to the TRAFAC class TrmE-Era-EngA-EngB-Septin-like GTPase superfamily. TrmE GTPase family. Homodimer. Heterotetramer of two MnmE and two MnmG subunits. It depends on K(+) as a cofactor.

It localises to the cytoplasm. Exhibits a very high intrinsic GTPase hydrolysis rate. Involved in the addition of a carboxymethylaminomethyl (cmnm) group at the wobble position (U34) of certain tRNAs, forming tRNA-cmnm(5)s(2)U34. The polypeptide is tRNA modification GTPase MnmE (Hyphomonas neptunium (strain ATCC 15444)).